Reading from the N-terminus, the 202-residue chain is MTTLLAAGWPVLIAALVLGYACGAIPFGLILTKFAGLGDVRAIGSGNIGATNVLRTGRKGLAAATLLCDALKGTLPVLAASHWGEGPALAAGLGAFLGHLFPVWLGFKGGKGVATFIGVLLALSPVTLAAFAAIWLGLAFALKYSSLSALAASAATPLILWALGHGAVAALFLVLAALLWWKHAPNIRRLAAGTEGRIGKKG.

Transmembrane regions (helical) follow at residues 11-31 (VLIA…GLIL), 87-107 (PALA…WLGF), 116-136 (FIGV…AIWL), and 158-178 (LILW…LAAL).

This sequence belongs to the PlsY family. As to quaternary structure, probably interacts with PlsX.

The protein localises to the cell inner membrane. It carries out the reaction an acyl phosphate + sn-glycerol 3-phosphate = a 1-acyl-sn-glycero-3-phosphate + phosphate. Its pathway is lipid metabolism; phospholipid metabolism. Functionally, catalyzes the transfer of an acyl group from acyl-phosphate (acyl-PO(4)) to glycerol-3-phosphate (G3P) to form lysophosphatidic acid (LPA). This enzyme utilizes acyl-phosphate as fatty acyl donor, but not acyl-CoA or acyl-ACP. This is Glycerol-3-phosphate acyltransferase from Methylorubrum extorquens (strain PA1) (Methylobacterium extorquens).